The sequence spans 278 residues: Asnovolin E/Chermesin D methyltransferase nvfJ (278 aa).

S-adenosyl-L-methionine-binding positions include 125–126 (DL), 152–153 (NI), and 153–154 (IL).

It belongs to the class I-like SAM-binding methyltransferase superfamily. As to quaternary structure, homodimer.

The catalysed reaction is chermesin D + S-adenosyl-L-methionine = chermesin D methyl ester + S-adenosyl-L-homocysteine. The enzyme catalyses asnovolin I + S-adenosyl-L-methionine = asnovolin K + S-adenosyl-L-homocysteine. It participates in secondary metabolite biosynthesis; terpenoid biosynthesis. Functionally, methyltransferase; part of the gene cluster that mediates the biosynthesis of novofumigatonin, a heavily oxygenated meroterpenoid containing a unique orthoester moiety. The first step of the pathway is the synthesis of 3,5-dimethylorsellinic acid (DMOA) by the polyketide synthase nvfA via condensation of one acetyl-CoA starter unit with 3 malonyl-CoA units and 2 methylations. DMOA is then converted to farnesyl-DMOA by the farnesyltransferase nvfB. Epoxydation by FAD-dependent monooxygenase nvfK, followed by a protonation-initiated cyclization catalyzed by the terpene cyclase nvfL leads to the production of asnavolin H. The short chain dehydrogenase nvfC then as a 3-OH dehydrogenase of asnovolin H to yield chemesin D. There are two branches to synthesize asnovolin A from chemesin D. In one branch, chemesin D undergoes Baeyer-Villiger oxidation by nvfH, methylation by nvfJ, and enoyl reduction by the nvfM D enoylreductase that reduces the double bond between C-5'and C-6', to form respectively asnovolin I, asnovolin K, and asnovolin A. In the other branch, the methylation precedes the Baeyer-Villiger oxidation and the enoyl reduction to yield asnovolin A via the asnovolin J intermediate. Asnovolin A is further converted to fumigatonoid A by the Fe(II)/2-oxoglutarate-dependent dioxygenase nvfI that catalyzes an endoperoxidation reaction. The alpha/beta hydrolase nvfD then acts as an epimerase that converts fumigatonoid A to its C-5' epimer, which then undergoes spontaneous or nvfD-catalyzed lactonization. The following step utilizes the ketoreductase nvfG to produce fumigatonoid B. The dioxygenase nvfE further converts fumigatonoid B into fumigatonoid C. Finally the Fe(II)/2-oxoglutarate-dependent dioxygenase nvfF catalyzes two rounds of oxidation to transform fumigatonoid C into the end product, novofumigatonin A. This chain is Asnovolin E/Chermesin D methyltransferase nvfJ, found in Aspergillus novofumigatus (strain IBT 16806).